Consider the following 156-residue polypeptide: Ribosomal RNA large subunit methyltransferase H (156 aa).

Residues Gly104 and 123–128 (LSALTL) each bind S-adenosyl-L-methionine.

The protein belongs to the RNA methyltransferase RlmH family. As to quaternary structure, homodimer.

It is found in the cytoplasm. It catalyses the reaction pseudouridine(1915) in 23S rRNA + S-adenosyl-L-methionine = N(3)-methylpseudouridine(1915) in 23S rRNA + S-adenosyl-L-homocysteine + H(+). Specifically methylates the pseudouridine at position 1915 (m3Psi1915) in 23S rRNA. The sequence is that of Ribosomal RNA large subunit methyltransferase H from Nitrosospira multiformis (strain ATCC 25196 / NCIMB 11849 / C 71).